Consider the following 587-residue polypeptide: Pentatricopeptide repeat-containing protein OGR1, mitochondrial (587 aa).

The transit peptide at 1–30 (MSVSAAARHLESLLPRLASLRHYLQFHARL) directs the protein to the mitochondrion. 8 PPR repeats span residues 145–179 (DVRL…DVAT), 200–203 (FHRL), 217–251 (NEVT…GLDR), 252–286 (NVRV…DQTL), 287–315 (VSYN…MPTR), 319–349 (DGVT…MRVA), 351–381 (NMKH…MPFP), and 383–417 (DIVL…GSNV). Residues 386-461 (LWQTLLGAAK…VPGFSYTEID (76 aa)) are type E motif. The interval 462-492 (GVMHKFINGDKEHPRWQEIYRALEDIVSRIS) is type E(+) motif. The segment at 493 to 587 (ELGYEPETSN…DGQCSCRDYW (95 aa)) is type DYW motif.

The protein resides in the mitochondrion. In terms of biological role, involved in multiple sites RNA editing events in mitochondria. Essential for C-to-U RNA editing at seven specific sites of nad2, nad4, cox2, cox3 and ccmC transcripts, all coding for proteins involved in the mitochondrial electron transport chain coupled to ATP generation. Required for normal growth and development. The chain is Pentatricopeptide repeat-containing protein OGR1, mitochondrial from Oryza sativa subsp. japonica (Rice).